Here is a 252-residue protein sequence, read N- to C-terminus: ATP synthase subunit a (252 aa).

A run of 6 helical transmembrane segments spans residues 29-49 (FTNVSLFTVVTVVITAAFLFI), 87-107 (FFPLVFSLFTFILVANFIGLF), 117-137 (IMITFSLAMVVILTVIGYGFY), 146-166 (LFVPSGVPVVVLPLVTMIEII), 196-216 (FIVSMIGVGIVGVGGAVLPLI), and 219-239 (VAITALEFLVAFLQAYVFTVL).

Belongs to the ATPase A chain family. In terms of assembly, F-type ATPases have 2 components, CF(1) - the catalytic core - and CF(0) - the membrane proton channel. CF(1) has five subunits: alpha(3), beta(3), gamma(1), delta(1), epsilon(1). CF(0) has three main subunits: a(1), b(2) and c(9-12). The alpha and beta chains form an alternating ring which encloses part of the gamma chain. CF(1) is attached to CF(0) by a central stalk formed by the gamma and epsilon chains, while a peripheral stalk is formed by the delta and b chains.

It is found in the cell inner membrane. Key component of the proton channel; it plays a direct role in the translocation of protons across the membrane. This chain is ATP synthase subunit a, found in Bartonella tribocorum (strain CIP 105476 / IBS 506).